Here is a 495-residue protein sequence, read N- to C-terminus: NADH-ubiquinone oxidoreductase chain 4 (495 aa).

The next 15 membrane-spanning stretches (helical) occupy residues 9-29, 39-59, 89-109, 118-138, 139-159, 173-193, 214-234, 245-265, 272-292, 313-333, 335-355, 367-387, 388-408, 413-433, and 457-477; these read YFDL…LLFI, LIGL…WIQF, LSLF…LVGW, EYII…CMLD, LLLF…IIGV, FFLY…LILL, ILLW…VPVH, PTAG…YGFL, FPEA…IAII, VAHM…GIGG, ILLM…VGVL, YGGL…FTLA, NMSL…VGAF, LVAT…LWLY, and VFIF…PKVF.

Belongs to the complex I subunit 4 family.

It localises to the mitochondrion membrane. The catalysed reaction is a ubiquinone + NADH + 5 H(+)(in) = a ubiquinol + NAD(+) + 4 H(+)(out). Core subunit of the mitochondrial membrane respiratory chain NADH dehydrogenase (Complex I) that is believed to belong to the minimal assembly required for catalysis. Complex I functions in the transfer of electrons from NADH to the respiratory chain. The immediate electron acceptor for the enzyme is believed to be ubiquinone. This Triticum aestivum (Wheat) protein is NADH-ubiquinone oxidoreductase chain 4 (ND4).